Consider the following 725-residue polypeptide: Ribosomal RNA large subunit methyltransferase K/L (725 aa).

In terms of domain architecture, THUMP spans 46–157 (VGYRLCLWSR…KGQAVLSLDL (112 aa)).

The protein belongs to the methyltransferase superfamily. RlmKL family.

The protein resides in the cytoplasm. The catalysed reaction is guanosine(2445) in 23S rRNA + S-adenosyl-L-methionine = N(2)-methylguanosine(2445) in 23S rRNA + S-adenosyl-L-homocysteine + H(+). It carries out the reaction guanosine(2069) in 23S rRNA + S-adenosyl-L-methionine = N(2)-methylguanosine(2069) in 23S rRNA + S-adenosyl-L-homocysteine + H(+). Its function is as follows. Specifically methylates the guanine in position 2445 (m2G2445) and the guanine in position 2069 (m7G2069) of 23S rRNA. This is Ribosomal RNA large subunit methyltransferase K/L from Stutzerimonas stutzeri (strain A1501) (Pseudomonas stutzeri).